The primary structure comprises 2309 residues: Collagen alpha-4(VI) chain (2309 aa).

Positions 1–22 (MGTWKTFWLIISLAAGLGFVKS) are cleaved as a signal peptide. The nonhelical region stretch occupies residues 21–1410 (KSQRIVCREA…TCCNMYAKCY (1390 aa)). VWFA domains are found at residues 34-206 (DIVF…AQKL), 235-413 (DIVF…LQAL), 430-653 (DVVF…FQRV), 634-811 (DLVF…GNKL), 849-1018 (DIYF…IRDI), and 1030-1199 (DIIF…EKEI). An N-linked (GlcNAc...) asparagine glycan is attached at Asn188. A glycan (N-linked (GlcNAc...) asparagine) is linked at Asn754. Asn1114 carries an N-linked (GlcNAc...) asparagine glycan. The tract at residues 1411-1744 (GDDGIRGEPG…GKMGTKGSKG (334 aa)) is triple-helical region. Residues 1414-1430 (GIRGEPGSRGEQGERGL) show a composition bias toward basic and acidic residues. Residues 1414–1746 (GIRGEPGSRG…MGTKGSKGLA (333 aa)) are disordered. The segment covering 1480–1489 (GEEGVGGLDG) has biased composition (gly residues). The Cell attachment site motif lies at 1527-1529 (RGD). Low complexity-rich tracts occupy residues 1605 to 1621 (PRGR…KGDP) and 1650 to 1669 (PAGE…PGLF). The nonhelical region stretch occupies residues 1745 to 2309 (LADRTPCEIV…EGECLNYVLK (565 aa)). 2 consecutive VWFA domains span residues 1776 to 1957 (EVVF…ASCT) and 1982 to 2187 (DLVF…LNLL). Positions 2208–2210 (RGD) match the Cell attachment site motif. A disordered region spans residues 2262 to 2300 (ALGSHGKDRADTEDIDQETPAKGRHLGPTHGPCPMGPEE).

Belongs to the type VI collagen family. Trimers composed of three different chains: alpha-1(VI), alpha-2(VI), and alpha-3(VI) or alpha-4(VI) or alpha-5(VI) or alpha-6(VI). Prolines at the third position of the tripeptide repeating unit (G-X-Y) are hydroxylated in some or all of the chains. As to expression, in newborn, it is expressed in lung, kidney, brain, intestine, skin, sternum and, at weak level, calvaria. In adult, it is almost absent with some weak expression in ovary and very weak expression in spleen, lung, uterus and brain.

Its subcellular location is the secreted. It localises to the extracellular space. It is found in the extracellular matrix. In terms of biological role, collagen VI acts as a cell-binding protein. The polypeptide is Collagen alpha-4(VI) chain (Col6a4) (Mus musculus (Mouse)).